Reading from the N-terminus, the 124-residue chain is Small ribosomal subunit protein uS12 (124 aa).

Aspartate 89 is subject to 3-methylthioaspartic acid.

This sequence belongs to the universal ribosomal protein uS12 family. Part of the 30S ribosomal subunit. Contacts proteins S8 and S17. May interact with IF1 in the 30S initiation complex.

Its function is as follows. With S4 and S5 plays an important role in translational accuracy. Interacts with and stabilizes bases of the 16S rRNA that are involved in tRNA selection in the A site and with the mRNA backbone. Located at the interface of the 30S and 50S subunits, it traverses the body of the 30S subunit contacting proteins on the other side and probably holding the rRNA structure together. The combined cluster of proteins S8, S12 and S17 appears to hold together the shoulder and platform of the 30S subunit. The sequence is that of Small ribosomal subunit protein uS12 from Shewanella sp. (strain ANA-3).